The chain runs to 337 residues: 5-formaminoimidazole-4-carboxamide-1-(beta)-D-ribofuranosyl 5'-monophosphate synthetase (337 aa).

The 5-amino-1-(5-phospho-beta-D-ribosyl)imidazole-4-carboxamide site is built by histidine 9 and serine 73. The region spanning 94–324 is the ATP-grasp domain; the sequence is KKIFEWEADQ…IGRRIAREIR (231 aa). Residues 124-184 and glutamate 206 contribute to the ATP site; that span reads PEDV…VPMY. Residue asparagine 234 participates in 5-amino-1-(5-phospho-beta-D-ribosyl)imidazole-4-carboxamide binding. Mg(2+)-binding residues include glutamate 273 and glutamate 286.

The protein belongs to the phosphohexose mutase family. Mg(2+) serves as cofactor. Mn(2+) is required as a cofactor.

It catalyses the reaction 5-amino-1-(5-phospho-beta-D-ribosyl)imidazole-4-carboxamide + formate + ATP = 5-formamido-1-(5-phospho-D-ribosyl)imidazole-4-carboxamide + ADP + phosphate. Its pathway is purine metabolism; IMP biosynthesis via de novo pathway; 5-formamido-1-(5-phospho-D-ribosyl)imidazole-4-carboxamide from 5-amino-1-(5-phospho-D-ribosyl)imidazole-4-carboxamide (formate route): step 1/1. Functionally, catalyzes the ATP- and formate-dependent formylation of 5-aminoimidazole-4-carboxamide-1-beta-d-ribofuranosyl 5'-monophosphate (AICAR) to 5-formaminoimidazole-4-carboxamide-1-beta-d-ribofuranosyl 5'-monophosphate (FAICAR) in the absence of folates. The chain is 5-formaminoimidazole-4-carboxamide-1-(beta)-D-ribofuranosyl 5'-monophosphate synthetase from Saccharolobus solfataricus (strain ATCC 35092 / DSM 1617 / JCM 11322 / P2) (Sulfolobus solfataricus).